Consider the following 388-residue polypeptide: Phosphopentomutase (388 aa).

The Mn(2+) site is built by Asp-11, Asp-283, His-288, Asp-324, His-325, and His-336.

Belongs to the phosphopentomutase family. It depends on Mn(2+) as a cofactor.

The protein localises to the cytoplasm. The enzyme catalyses 2-deoxy-alpha-D-ribose 1-phosphate = 2-deoxy-D-ribose 5-phosphate. It catalyses the reaction alpha-D-ribose 1-phosphate = D-ribose 5-phosphate. It participates in carbohydrate degradation; 2-deoxy-D-ribose 1-phosphate degradation; D-glyceraldehyde 3-phosphate and acetaldehyde from 2-deoxy-alpha-D-ribose 1-phosphate: step 1/2. In terms of biological role, isomerase that catalyzes the conversion of deoxy-ribose 1-phosphate (dRib-1-P) and ribose 1-phosphate (Rib-1-P) to deoxy-ribose 5-phosphate (dRib-5-P) and ribose 5-phosphate (Rib-5-P), respectively. This chain is Phosphopentomutase, found in Anaeromyxobacter dehalogenans (strain 2CP-1 / ATCC BAA-258).